The chain runs to 339 residues: Probable cytosolic iron-sulfur protein assembly protein CIAO1 (339 aa).

7 WD repeats span residues 14–53, 59–98, 103–142, 148–187, 192–231, 250–289, and 301–339; these read HPDSRCWFLAWNPTGTLLASCGGDRKIRIWGTEGDSWICK, GHQRTVRKVAWSPCGNYLASASFDATTCIWKKNQDDFECV, GHENEVKSVAWAPSGNLLATCSRDKSVWVWEVDEEDEYEC, SHTQDVKHVVWHPSQELLASASYDDTVKLYQEEGDDWVCC, GHESTVWSIAFDPSGQRLASCSDDRTVRIWRQYLPGNEQG, FHTRTIYDVAWCQLTGALATACGDDAIRVFEEDPGSDPQQ, and AHSQDVNCVAWNPKEAGLLASCSDDGEVAFWEYHQPAGL. The LYR motif; required for interaction with HSC20 motif lies at 176 to 178; the sequence is LYQ.

The protein belongs to the WD repeat CIA1 family. As to quaternary structure, component of the CIA complex. Interacts with CIAO2A and forms a complex with CIAO2B and MMS19; the interactions with CIAO2A and CIAO2B are mutually exclusive. Interacts with CHD1L, ERCC2, IREB2 and POLD1. Component of the MMXD complex, which includes CIAO1, ERCC2, CIAO2B, MMS19 and SLC25A5. Interacts with WT1. Interacts with CIAO3. Interacts (via LYR motif) with HSC20.

Its subcellular location is the cytoplasm. Functionally, key component of the cytosolic iron-sulfur protein assembly (CIA) complex, a multiprotein complex that mediates the incorporation of iron-sulfur cluster into extramitochondrial Fe/S proteins. As a CIA complex component, interacts specifically with CIAO2A or CIAO2B and MMS19 to assist different branches of iron-sulfur protein assembly, depending of its interactors. The complex CIAO1:CIAO2B:MMS19 binds to and facilitates the assembly of most cytosolic-nuclear Fe/S proteins. CIAO1:CIAO2A specifically matures ACO1 and stabilizes IREB2. Seems to specifically modulate the transactivation activity of WT1. As part of the mitotic spindle-associated MMXD complex it may play a role in chromosome segregation. The sequence is that of Probable cytosolic iron-sulfur protein assembly protein CIAO1 from Rattus norvegicus (Rat).